A 1588-amino-acid polypeptide reads, in one-letter code: RB1-inducible coiled-coil protein 1 (1588 aa).

Phosphoserine occurs at positions 222, 229, and 237. Thr238 bears the Phosphothreonine mark. A phosphoserine mark is found at Ser243, Ser253, Ser257, and Ser261. The short motif at 565-568 is the Nuclear localization signal element; sequence KPRK. Ser623, Ser646, Ser649, Ser652, Ser733, Ser1087, Ser1366, and Ser1478 each carry phosphoserine. The disordered stretch occupies residues 638–674; the sequence is QKVSTSQASPQSAASPRIESTTGITTTTSPKTPPPLT. Positions 643–667 are enriched in low complexity; it reads SQASPQSAASPRIESTTGITTTTSP. The short motif at 730 to 736 is the FFAT element; it reads DFMSAVN. Coiled-coil stretches lie at residues 858–1393 and 1440–1479; these read LKEK…TSSF and SVQE…SQSL.

Part of a complex containing ATG13/KIAA0652, ULK1 and RB1CC1. This complex associates with ATG101. Interacts with PTK2/FAK1 and PTK2B/PYK2. Interacts with GABARAP and GABARAPL1. Interacts with ATG16L1; the interaction is required for ULK1 complex-dependent autophagy. Interacts with RNF111, SKI and SMAD7. Interacts with COP1 in the cytoplasm of proliferating cells in response to UV stimulation. Interacts with TP53. Interacts with C9orf72. Interacts with WDR45B. Interacts with ATG13; this interaction is increased in the absence of TMEM39A. Interacts with WIPI2. Interacts with TAX1BP1. Interacts (via phosphorylated FFAT motif) with MOSPD2. Phosphorylation at Ser-733 of the FFAT motif activates interaction with MOSPD2. As to expression, expressed abundantly in heart and testis, and moderately in kidney, liver and skeletal muscles. Very low expression levels in lung and spleen. Colocalizes with RB1 in various tissues.

It localises to the nucleus. Its subcellular location is the cytoplasm. It is found in the cytosol. The protein resides in the preautophagosomal structure. The protein localises to the lysosome. Its function is as follows. Involved in autophagy. Regulates early events but also late events of autophagosome formation through direct interaction with Atg16L1. Required for the formation of the autophagosome-like double-membrane structure that surrounds the Salmonella-containing vacuole (SCV) during S.typhimurium infection and subsequent xenophagy. Involved in repair of DNA damage caused by ionizing radiation, which subsequently improves cell survival by decreasing apoptosis. Inhibits PTK2/FAK1 and PTK2B/PYK2 kinase activity, affecting their downstream signaling pathways. Plays a role as a modulator of TGF-beta-signaling by restricting substrate specificity of RNF111. Functions as a DNA-binding transcription factor. Is a potent regulator of the RB1 pathway through induction of RB1 expression. Plays a crucial role in muscular differentiation. Plays an indispensable role in fetal hematopoiesis and in the regulation of neuronal homeostasis. The sequence is that of RB1-inducible coiled-coil protein 1 from Mus musculus (Mouse).